A 100-amino-acid polypeptide reads, in one-letter code: Histone H3-like 2 (100 aa).

A disordered region spans residues 1–46 (MARMKHTARMSTGGKAPRKQLASKALRKAPPPPTKGVKQPTTTTSG).

This sequence belongs to the histone H3 family. The nucleosome is a histone octamer containing two molecules each of H2A, H2B, H3 and H4 assembled in one H3-H4 heterotetramer and two H2A-H2B heterodimers. The octamer wraps approximately 147 bp of DNA. Pollen specific.

The protein resides in the nucleus. It localises to the chromosome. Its function is as follows. Core component of nucleosome. Nucleosomes wrap and compact DNA into chromatin, limiting DNA accessibility to the cellular machineries which require DNA as a template. Histones thereby play a central role in transcription regulation, DNA repair, DNA replication and chromosomal stability. DNA accessibility is regulated via a complex set of post-translational modifications of histones, also called histone code, and nucleosome remodeling. The chain is Histone H3-like 2 (gcH3) from Lilium longiflorum (Trumpet lily).